An 845-amino-acid polypeptide reads, in one-letter code: Translation initiation factor IF-2 (845 aa).

Disordered stretches follow at residues 44–91 (KRRK…NLSS) and 119–256 (ARRA…NQEP). Basic and acidic residues predominate over residues 119 to 129 (ARRAKEREESL). Positions 139 to 148 (DETPQEEEEP) are enriched in acidic residues. The span at 156-165 (SLSPAQSQIE) shows a compositional bias: polar residues. 2 stretches are compositionally biased toward basic and acidic residues: residues 179 to 194 (IEKR…DRNS) and 202 to 217 (SEVR…DEKR). Residues 343–510 (LRPPVVTIMG…AILLQAEILD (168 aa)) enclose the tr-type G domain. The G1 stretch occupies residues 352-359 (GHVDHGKT). Residue 352-359 (GHVDHGKT) participates in GTP binding. The tract at residues 377–381 (GITQH) is G2. The tract at residues 398 to 401 (DTPG) is G3. Residues 398–402 (DTPGH) and 452–455 (NKID) contribute to the GTP site. A G4 region spans residues 452–455 (NKID). The interval 488–490 (SAK) is G5.

It belongs to the TRAFAC class translation factor GTPase superfamily. Classic translation factor GTPase family. IF-2 subfamily.

It localises to the cytoplasm. Functionally, one of the essential components for the initiation of protein synthesis. Protects formylmethionyl-tRNA from spontaneous hydrolysis and promotes its binding to the 30S ribosomal subunits. Also involved in the hydrolysis of GTP during the formation of the 70S ribosomal complex. In Bartonella henselae (strain ATCC 49882 / DSM 28221 / CCUG 30454 / Houston 1) (Rochalimaea henselae), this protein is Translation initiation factor IF-2.